The chain runs to 826 residues: U4/U6 snRNA-associated-splicing factor PRP24 (826 aa).

RRM domains follow at residues 310–385, 386–463, 477–554, and 598–670; these read TSVF…EAAG, ITLY…YSDP, REVH…LSVS, and RSFA…AVPQ.

It is found in the nucleus. Functionally, functions as a recycling factor of the spliceosome, a machinery that forms on each precursor-messenger RNA (pre-mRNA) and catalyzes the removal of introns. Chaperones the re-annealing of U4 and U6 snRNAs (small nuclear RNAs) released from previous rounds of splicing, an initial step in reforming the U4/U6-U5 tri-snRNP (small nuclear ribonucleoprotein) that can reassemble into another spliceosome complex; this step involves binding U6 and facilitating the unwinding of the U6 internal stem loop, followed by base-pairing of U6 to U4. In Ophiostoma ulmi (Dutch elm disease fungus), this protein is U4/U6 snRNA-associated-splicing factor PRP24.